Consider the following 307-residue polypeptide: Pseudouridine-5'-phosphate glycosidase (307 aa).

The active-site Proton donor is the Glu-28. Lys-89 and Val-109 together coordinate substrate. Mn(2+) is bound at residue Asp-141. Residue 143–145 (SAD) participates in substrate binding. The active-site Nucleophile is Lys-162.

It belongs to the pseudouridine-5'-phosphate glycosidase family. As to quaternary structure, homotrimer. Requires Mn(2+) as cofactor.

It catalyses the reaction D-ribose 5-phosphate + uracil = psi-UMP + H2O. In terms of biological role, catalyzes the reversible cleavage of pseudouridine 5'-phosphate (PsiMP) to ribose 5-phosphate and uracil. Functions biologically in the cleavage direction, as part of a pseudouridine degradation pathway. In Staphylococcus aureus (strain MW2), this protein is Pseudouridine-5'-phosphate glycosidase.